The chain runs to 268 residues: Ribosomal RNA small subunit methyltransferase A (268 aa).

Positions 23, 25, 50, 72, 97, and 116 each coordinate S-adenosyl-L-methionine.

It belongs to the class I-like SAM-binding methyltransferase superfamily. rRNA adenine N(6)-methyltransferase family. RsmA subfamily.

The protein localises to the cytoplasm. The catalysed reaction is adenosine(1518)/adenosine(1519) in 16S rRNA + 4 S-adenosyl-L-methionine = N(6)-dimethyladenosine(1518)/N(6)-dimethyladenosine(1519) in 16S rRNA + 4 S-adenosyl-L-homocysteine + 4 H(+). Functionally, specifically dimethylates two adjacent adenosines (A1518 and A1519) in the loop of a conserved hairpin near the 3'-end of 16S rRNA in the 30S particle. May play a critical role in biogenesis of 30S subunits. The chain is Ribosomal RNA small subunit methyltransferase A from Rickettsia prowazekii (strain Madrid E).